A 179-amino-acid polypeptide reads, in one-letter code: Small heat shock protein hspK (179 aa).

The sHSP domain maps to 32–178; it reads HRINIWRPTV…DRLKIPIQSK (147 aa). The tract at residues 80-122 is disordered; the sequence is KKSKGGLNNLPSSSSSINSDSTTNTNTNTTTTTTTAPPPPSDA. Residues 87–114 are compositionally biased toward low complexity; it reads NNLPSSSSSINSDSTTNTNTNTTTTTTT.

Belongs to the small heat shock protein (HSP20) family.

The sequence is that of Small heat shock protein hspK (hspK) from Dictyostelium discoideum (Social amoeba).